We begin with the raw amino-acid sequence, 288 residues long: MGSLKEIDTRIKSTKKMKQITKAMNMVSSSKLRRAESNAKQFRPYMEKMQDAITAVAGSDKNSRHPMLQQREVKKSAYLVITSDKGLAGAYNANVLKHLIKDIEEKHASKDDYSIVVLGQTGVDFLKNKGYDIHDSLIDVPDQPSFKEVQAIAKKAIGLYSEGEVDEVKIYFSHFVSVLENTPSTKTVLPLSPEDSSLGHGQMSSYEFEPDKEAILSVILPQYVESLIYGTILDAKASEHATRMTAMKNASDNASEIIDDLSIQYNRARQAAITQQITEIVGGSVALE.

This sequence belongs to the ATPase gamma chain family. As to quaternary structure, F-type ATPases have 2 components, CF(1) - the catalytic core - and CF(0) - the membrane proton channel. CF(1) has five subunits: alpha(3), beta(3), gamma(1), delta(1), epsilon(1). CF(0) has three main subunits: a, b and c.

It is found in the cell membrane. Its function is as follows. Produces ATP from ADP in the presence of a proton gradient across the membrane. The gamma chain is believed to be important in regulating ATPase activity and the flow of protons through the CF(0) complex. This chain is ATP synthase gamma chain, found in Staphylococcus saprophyticus subsp. saprophyticus (strain ATCC 15305 / DSM 20229 / NCIMB 8711 / NCTC 7292 / S-41).